The chain runs to 275 residues: Nurim (275 aa).

At 1–4 (MASV) the chain is on the nuclear side. A helical transmembrane segment spans residues 5–32 (TFRDGFLCVSALITFVFVFVTGADFVRF). Over 33 to 63 (VSFRAINHNLSGAAPLCRDSVPWSVALRDGV) the chain is Perinuclear space. Residues 64 to 85 (VQKAVAVDVLLLVVFSLQHSLL) traverse the membrane as a helical segment. The Nuclear portion of the chain corresponds to 86 to 102 (AWTPVKRVCQSVFGVLS). Residues 103-119 (RSVYCFTTAAALQILMH) form a helical membrane-spanning segment. The Perinuclear space segment spans residues 120-138 (YWRPVTSAPCLWSVSSAPW). A helical transmembrane segment spans residues 139–169 (EIWFPLICFIVHFLCWAIICSILLIFDYPEL). At 170-196 (LGIKQVYYECLGLGDPLLLKSERAQRL) the chain is on the nuclear side. A helical transmembrane segment spans residues 197–215 (YSHLRHPVCVELLTVLWLL). The Perinuclear space portion of the chain corresponds to 216–221 (PSFPLD). A helical transmembrane segment spans residues 222-239 (RLLLAVFLTVYLILAHSL). The Nuclear portion of the chain corresponds to 240 to 275 (DKQDCAYLRHQLRNKLQLFSTPLEGSEQTNDNNKLE).

It belongs to the nurim family.

It localises to the nucleus inner membrane. The sequence is that of Nurim (nrm) from Danio rerio (Zebrafish).